The following is a 379-amino-acid chain: ATP phosphoribosyltransferase regulatory subunit (379 aa).

It belongs to the class-II aminoacyl-tRNA synthetase family. HisZ subfamily. Heteromultimer composed of HisG and HisZ subunits.

The protein localises to the cytoplasm. It functions in the pathway amino-acid biosynthesis; L-histidine biosynthesis; L-histidine from 5-phospho-alpha-D-ribose 1-diphosphate: step 1/9. Functionally, required for the first step of histidine biosynthesis. May allow the feedback regulation of ATP phosphoribosyltransferase activity by histidine. The polypeptide is ATP phosphoribosyltransferase regulatory subunit (Paramagnetospirillum magneticum (strain ATCC 700264 / AMB-1) (Magnetospirillum magneticum)).